Reading from the N-terminus, the 492-residue chain is N-succinylglutamate 5-semialdehyde dehydrogenase (492 aa).

220 to 225 (GSAGTG) lines the NAD(+) pocket. Residues Glu243 and Cys277 contribute to the active site.

Belongs to the aldehyde dehydrogenase family. AstD subfamily.

It catalyses the reaction N-succinyl-L-glutamate 5-semialdehyde + NAD(+) + H2O = N-succinyl-L-glutamate + NADH + 2 H(+). It participates in amino-acid degradation; L-arginine degradation via AST pathway; L-glutamate and succinate from L-arginine: step 4/5. In terms of biological role, catalyzes the NAD-dependent reduction of succinylglutamate semialdehyde into succinylglutamate. The protein is N-succinylglutamate 5-semialdehyde dehydrogenase of Cronobacter sakazakii (strain ATCC BAA-894) (Enterobacter sakazakii).